Consider the following 492-residue polypeptide: 6-phosphogluconate dehydrogenase, decarboxylating (492 aa).

NADP(+) contacts are provided by residues 13–18 (GLAVMG), 36–38 (NRT), 78–80 (VKA), and N106. N106 is a binding site for substrate. S107 carries the phosphoserine modification. Residue 132 to 134 (SGG) participates in substrate binding. K187 serves as the catalytic Proton acceptor. Position 190-191 (190-191 (HN)) interacts with substrate. E194 acts as the Proton donor in catalysis. Substrate is bound at residue Y195. A Phosphoserine modification is found at S215. 4 residues coordinate substrate: K264, R291, R449, and H455.

The protein belongs to the 6-phosphogluconate dehydrogenase family. As to quaternary structure, homodimer.

The catalysed reaction is 6-phospho-D-gluconate + NADP(+) = D-ribulose 5-phosphate + CO2 + NADPH. It functions in the pathway carbohydrate degradation; pentose phosphate pathway; D-ribulose 5-phosphate from D-glucose 6-phosphate (oxidative stage): step 3/3. Catalyzes the oxidative decarboxylation of 6-phosphogluconate to ribulose 5-phosphate and CO(2), with concomitant reduction of NADP to NADPH. This is 6-phosphogluconate dehydrogenase, decarboxylating from Schizosaccharomyces pombe (strain 972 / ATCC 24843) (Fission yeast).